An 89-amino-acid polypeptide reads, in one-letter code: Small ribosomal subunit protein uS15 (89 aa).

It belongs to the universal ribosomal protein uS15 family. Part of the 30S ribosomal subunit. Forms a bridge to the 50S subunit in the 70S ribosome, contacting the 23S rRNA.

In terms of biological role, one of the primary rRNA binding proteins, it binds directly to 16S rRNA where it helps nucleate assembly of the platform of the 30S subunit by binding and bridging several RNA helices of the 16S rRNA. Functionally, forms an intersubunit bridge (bridge B4) with the 23S rRNA of the 50S subunit in the ribosome. The protein is Small ribosomal subunit protein uS15 of Chlorobium chlorochromatii (strain CaD3).